The chain runs to 399 residues: MPPTSRPVPPPPKRRISESSSSSDDELTGNNSFRENQQRRFRENNEVGNISDSDNDEVFSHQESQSVGFIETDEERQREEHAQNSNLRNRRVSYGKIPVPPMSMTVEDIQEAAKHSREDPSGETVEVRRPNDPRRSSVSLDVFKSFRDPHDKRNMPAKDKTIYVEGPNGKFREMKKGKFWNRDKFDSPKKDAEKKQDEDSVIPFLLKAPGQAYRTQRVYNQIANIIQGFLAGISVMLAIFSFNLEPEVLLTGYRYMSLPIHAGFMVAFTVGLVSAIDRTGIYEVEHFTSRTRLTATVYNNGLITFIVWFVGLVSTLLCIQLESQLAFAPTRIPSEDLVHHWRVFNVLRALTSGLGFLLLAFKPDSDTMAKELREAIYEQLELVTSDPERRRVIITAMKI.

Pro residues predominate over residues 1–11; sequence MPPTSRPVPPP. The disordered stretch occupies residues 1-158; that stretch reads MPPTSRPVPP…PHDKRNMPAK (158 aa). 3 stretches are compositionally biased toward basic and acidic residues: residues 36-45, 111-135, and 144-158; these read NQQRRFRENN, EAAK…DPRR, and KSFR…MPAK. 4 consecutive transmembrane segments (helical) span residues 222–242, 256–276, 301–321, and 343–363; these read IANI…IFSF, MSLP…VSAI, GLIT…CIQL, and VFNV…AFKP.

The protein belongs to the TMEM237 family.

It is found in the membrane. The protein resides in the cell projection. Its subcellular location is the cilium. In terms of biological role, component of the transition zone in primary cilia. Required for ciliogenesis. The protein is Transmembrane protein 237 homolog of Caenorhabditis elegans.